The chain runs to 479 residues: Ribosomal RNA small subunit methyltransferase F (479 aa).

S-adenosyl-L-methionine-binding positions include 125–131, glutamate 149, aspartate 176, and aspartate 194; that span reads AAAPGSK. Cysteine 247 (nucleophile) is an active-site residue.

Belongs to the class I-like SAM-binding methyltransferase superfamily. RsmB/NOP family.

It is found in the cytoplasm. It catalyses the reaction cytidine(1407) in 16S rRNA + S-adenosyl-L-methionine = 5-methylcytidine(1407) in 16S rRNA + S-adenosyl-L-homocysteine + H(+). Its function is as follows. Specifically methylates the cytosine at position 1407 (m5C1407) of 16S rRNA. The polypeptide is Ribosomal RNA small subunit methyltransferase F (Escherichia fergusonii (strain ATCC 35469 / DSM 13698 / CCUG 18766 / IAM 14443 / JCM 21226 / LMG 7866 / NBRC 102419 / NCTC 12128 / CDC 0568-73)).